The sequence spans 431 residues: Adenylosuccinate synthetase (431 aa).

GTP-binding positions include 12–18 (GDEGKGK) and 40–42 (GHT). Aspartate 13 (proton acceptor) is an active-site residue. Residues aspartate 13 and glycine 40 each coordinate Mg(2+). IMP contacts are provided by residues 13–16 (DEGK), 38–41 (NAGH), threonine 128, arginine 142, glutamine 223, threonine 238, and arginine 301. Catalysis depends on histidine 41, which acts as the Proton donor. Residue 297 to 303 (TVTGRPR) coordinates substrate. GTP contacts are provided by residues arginine 303, 329–331 (SID), and 411–413 (SVG).

The protein belongs to the adenylosuccinate synthetase family. Homodimer. It depends on Mg(2+) as a cofactor.

Its subcellular location is the cytoplasm. The enzyme catalyses IMP + L-aspartate + GTP = N(6)-(1,2-dicarboxyethyl)-AMP + GDP + phosphate + 2 H(+). The protein operates within purine metabolism; AMP biosynthesis via de novo pathway; AMP from IMP: step 1/2. In terms of biological role, plays an important role in the de novo pathway of purine nucleotide biosynthesis. Catalyzes the first committed step in the biosynthesis of AMP from IMP. The sequence is that of Adenylosuccinate synthetase from Lacticaseibacillus paracasei (strain ATCC 334 / BCRC 17002 / CCUG 31169 / CIP 107868 / KCTC 3260 / NRRL B-441) (Lactobacillus paracasei).